The sequence spans 217 residues: Killer cell lectin-like receptor subfamily B member 1F (217 aa).

Topologically, residues 1–45 are cytoplasmic; that stretch reads MDTSRVYGNVKTFRSPGHKQASFPSLSTDACRCPHWHHLALKLGC. The LCK-binding motif signature appears at 31 to 34; sequence CRCP. The helical; Signal-anchor for type II membrane protein transmembrane segment at 46–66 threads the bilayer; it reads ATLILLLLTLIGLSVFVRFLV. The Extracellular segment spans residues 67–217; the sequence is QKPLIEKCSM…WICQKTLKHV (151 aa). Residues 101–211 enclose the C-type lectin domain; sequence HRNKCLIISQ…CSSDNHWICQ (111 aa). 2 cysteine pairs are disulfide-bonded: Cys-122–Cys-210 and Cys-189–Cys-202.

As to expression, expressed in natural killer cells and a subset of T-cells.

It is found in the membrane. Binds CLEC2I/Clr-g leading to activation of natural killer cells or stimulation of IL-2 production and proliferation of T-cells in response to antigen stimulation. May contribute to the formation of the immunological synapse between T-cells and antigen-presenting dendritic cells. The sequence is that of Killer cell lectin-like receptor subfamily B member 1F from Rattus norvegicus (Rat).